Consider the following 378-residue polypeptide: MQRHATVLLPAKERFVMKIGVFVPIGNNGWLISTHAPQYMPTFELNKAIVQKAEQQQFDFALSMIKLRGFGGKTEFWDHNLESFTLMAGLAAVTSRIQIYATAATLTLPPAIVARMASTIDSISGGRFGVNLVTGWQKPEYEQMGLWPGDEYFSRRYDYLTEYVHVLRDLWDTGQSDFKGDYFTMNDCRVSPRPQQPMKVICAGQSDAGMAFSAQHADYNFCFGKGVNTPAAFAPTAARMKAAADKAGRNVGSYVLFMVIADETDDAARAKWEHYKAGADEEALSWLTEQSQKDTRSGADTNVRQMADPTSAVNINMGTLVGSYASVARMLDEVAAVPGTEGVLLTFDDFLTGIDAFGEHIQPLMRCRDHLRVTQEVA.

FMN is bound by residues 65–66 (IK), Asn-131, Glu-140, 156–157 (RY), and Ser-206.

The protein belongs to the NtaA/SnaA/DszA monooxygenase family. RutA subfamily.

It carries out the reaction uracil + FMNH2 + NADH + O2 = (Z)-3-ureidoacrylate + FMN + NAD(+) + H2O + H(+). The catalysed reaction is thymine + FMNH2 + NADH + O2 = (Z)-2-methylureidoacrylate + FMN + NAD(+) + H2O + H(+). Its function is as follows. Catalyzes the pyrimidine ring opening between N-3 and C-4 by an unusual flavin hydroperoxide-catalyzed mechanism, adding oxygen atoms in the process to yield ureidoacrylate peracid, that immediately reacts with FMN forming ureidoacrylate and FMN-N(5)-oxide. The FMN-N(5)-oxide reacts spontaneously with NADH to produce FMN. Requires the flavin reductase RutF to regenerate FMN in vivo. The polypeptide is Pyrimidine monooxygenase RutA (Cronobacter turicensis (strain DSM 18703 / CCUG 55852 / LMG 23827 / z3032)).